We begin with the raw amino-acid sequence, 239 residues long: LexA repressor (239 aa).

Residues 26-46 constitute a DNA-binding region (H-T-H motif); the sequence is FDEMKDALDLASKSGIHRLIT. A disordered region spans residues 84–107; the sequence is SPSVIEGSLGKPQPVATPAPAKSV. Catalysis depends on for autocatalytic cleavage activity residues S159 and K197.

The protein belongs to the peptidase S24 family. In terms of assembly, homodimer.

The catalysed reaction is Hydrolysis of Ala-|-Gly bond in repressor LexA.. Represses a number of genes involved in the response to DNA damage (SOS response), including recA and lexA. In the presence of single-stranded DNA, RecA interacts with LexA causing an autocatalytic cleavage which disrupts the DNA-binding part of LexA, leading to derepression of the SOS regulon and eventually DNA repair. In Rhizobium johnstonii (strain DSM 114642 / LMG 32736 / 3841) (Rhizobium leguminosarum bv. viciae), this protein is LexA repressor.